Here is a 286-residue protein sequence, read N- to C-terminus: Probable endonuclease 4 (286 aa).

His67, His107, Glu146, Asp180, His183, His217, Asp230, His232, and Glu262 together coordinate Zn(2+).

This sequence belongs to the AP endonuclease 2 family. Requires Zn(2+) as cofactor.

It carries out the reaction Endonucleolytic cleavage to 5'-phosphooligonucleotide end-products.. Endonuclease IV plays a role in DNA repair. It cleaves phosphodiester bonds at apurinic or apyrimidinic (AP) sites, generating a 3'-hydroxyl group and a 5'-terminal sugar phosphate. The chain is Probable endonuclease 4 from Methanosphaerula palustris (strain ATCC BAA-1556 / DSM 19958 / E1-9c).